The chain runs to 293 residues: 1D-myo-inositol 2-acetamido-2-deoxy-alpha-D-glucopyranoside deacetylase (293 aa).

Residues His-15, Asp-18, and His-148 each coordinate Zn(2+).

Belongs to the MshB deacetylase family. Requires Zn(2+) as cofactor.

The enzyme catalyses 1D-myo-inositol 2-acetamido-2-deoxy-alpha-D-glucopyranoside + H2O = 1D-myo-inositol 2-amino-2-deoxy-alpha-D-glucopyranoside + acetate. Functionally, catalyzes the deacetylation of 1D-myo-inositol 2-acetamido-2-deoxy-alpha-D-glucopyranoside (GlcNAc-Ins) in the mycothiol biosynthesis pathway. In Corynebacterium diphtheriae (strain ATCC 700971 / NCTC 13129 / Biotype gravis), this protein is 1D-myo-inositol 2-acetamido-2-deoxy-alpha-D-glucopyranoside deacetylase.